The primary structure comprises 737 residues: Palmitoyltransferase AKR1 (737 aa).

Residues 1–47 form a disordered region; that stretch reads MKQIDSEDSITVPNDTPEDNSASSMQPVMSNLSIEEHQSENEPIEQE. Residues 1 to 304 are Cytoplasmic-facing; sequence MKQIDSEDSI…VYFKKSLHTK (304 aa). The span at 9 to 33 shows a compositional bias: polar residues; sequence SITVPNDTPEDNSASSMQPVMSNLS. ANK repeat units lie at residues 54–84, 90–119, 124–153, 157–190, 194–223, and 227–256; these read PLLSKYHLACQQGDLATVKEIIENGVIDLKH, ERVSGLHWASINNRLSVVRYLISKDVDVNF, LNATPLHWAARYGYVYIVDYLLEHGADPSV, QGFNLLHLSINSSNIMLVIYVLFFVIDDKLDIDC, NGRTALLWAAYQGDSLSVETLLKFRASVKA, and GGFTPLHWGTVKGQAQVLKHLIENGADFFQ. 2 helical membrane-spanning segments follow: residues 305 to 325 and 326 to 346; these read LVTFFAPWIFIGVLFKCFASI and HPIFSLIFSILLGLGMRYTLK. The Cytoplasmic segment spans residues 347–364; sequence KYVIPAYAQRNTRQSFLK. A helical transmembrane segment spans residues 365-385; sequence TPFLAGVFSGSVFWASYTWLT. At 386 to 396 the chain is on the lumenal side; that stretch reads RIMPLTLIEEP. Residues 397-417 traverse the membrane as a helical segment; that stretch reads ITNLLFFAGVVLLASLFVKLV. At 418-493 the chain is on the cytoplasmic side; it reads RSDPGLIPEE…YNDIGLRNHK (76 aa). The DHHC domain occupies 450-500; the sequence is HFCISTWVRKPIRSKFSNFSRALVTRFDHFCPWIYNDIGLRNHKTFLFFIL. Cysteine 480 (S-palmitoyl cysteine intermediate) is an active-site residue. The chain crosses the membrane as a helical span at residues 494-514; that stretch reads TFLFFILCLETCIFVFLKLCM. Topologically, residues 515–547 are lumenal; the sequence is EYFDVLEDTFEDDYDLNCGIFGEDLCAGFFFDT. Residues 548-568 form a helical membrane-spanning segment; that stretch reads FTFLVLAWTCFQGIWVGFLTF. The Cytoplasmic segment spans residues 569 to 737; it reads VQLFQTAKGV…ERHYLAEEIV (169 aa).

It belongs to the DHHC palmitoyltransferase family. AKR/ZDHHC17 subfamily.

It is found in the early endosome membrane. It localises to the golgi apparatus membrane. The enzyme catalyses L-cysteinyl-[protein] + hexadecanoyl-CoA = S-hexadecanoyl-L-cysteinyl-[protein] + CoA. In terms of biological role, palmitoyltransferase specific for casein kinase 1. The sequence is that of Palmitoyltransferase AKR1 (AKR1) from Lachancea kluyveri (strain ATCC 58438 / CBS 3082 / BCRC 21498 / NBRC 1685 / JCM 7257 / NCYC 543 / NRRL Y-12651) (Yeast).